A 577-amino-acid chain; its full sequence is MSSASKSTPSAASGSSTSAAAAAAASVASGSASSSANVQEFKIRVPKMPKKHHVMRFNATLNVDFAQWRNVKLERENNMKEFRGMEEDQPKFGAGSEYNRDQREEARRKKFGIIARKYRPEAQPWILKVGGKTGKKFKGIREGGVGENAAFYVFTHAPDGAIEAYPLTEWYNFQPIQRYKSLSAEEAEQEFGRRKKVMNYFSLMLRKRLRGDEEEEQDPEEAKLIKAATKKSKELKITDMDEWIDSEDESDSEDEEDKKKKEQEDSDDGKAKGKGKKGADKKKKKRDVDDEAFEESDDGDEEGREMDYDTSSSEDEPDPEAKVDKDMKGVAEEDALRKLLTSDEEEDDEKKSDESDKEDADGEKKKKDKGKDEVSKDKKKKKPTKDDKKGKSNGSGDSSTDFSSDSTDSEDDLSNGPPKKKVVVKDKDKEKEKEKESAASSKVIASSSNANKSRSATPTLSTDASKRKMNSLPSDLTASDTSNSPTSTPAKRPKNEISTSLPTSFSGGKVEDYGITEEAVRRYLKRKPLTATELLTKFKNKKTPVSSDRLVETMTKILKKINPVKHTIQGKMYLWIK.

The disordered stretch occupies residues 1-36 (MSSASKSTPSAASGSSTSAAAAAAASVASGSASSSA). 4 positions are modified to phosphoserine: serine 183, serine 246, serine 250, and serine 252. The disordered stretch occupies residues 236–508 (KITDMDEWID…TSLPTSFSGG (273 aa)). A compositionally biased stretch (acidic residues) spans 240 to 256 (MDEWIDSEDESDSEDEE). Over residues 257 to 271 (DKKKKEQEDSDDGKA) the composition is skewed to basic and acidic residues. Residues 272–285 (KGKGKKGADKKKKK) are compositionally biased toward basic residues. The segment covering 289–304 (DDEAFEESDDGDEEGR) has biased composition (acidic residues). Positions 319 to 341 (PEAKVDKDMKGVAEEDALRKLLT) are enriched in basic and acidic residues. Threonine 341 is modified (phosphothreonine). Serine 342, serine 352, and serine 355 each carry phosphoserine. The span at 362–376 (GEKKKKDKGKDEVSK) shows a compositional bias: basic and acidic residues. Low complexity predominate over residues 392–406 (SNGSGDSSTDFSSDS). Positions 423-437 (VVKDKDKEKEKEKES) are enriched in basic and acidic residues. Residues 438-456 (AASSKVIASSSNANKSRSA) are compositionally biased toward low complexity. Residues serine 453 and serine 455 each carry the phosphoserine modification. Phosphothreonine is present on threonine 457. Polar residues-rich tracts occupy residues 471–489 (SLPSDLTASDTSNSPTSTP) and 496–506 (EISTSLPTSFS). Residues serine 482 and serine 484 each carry the phosphoserine modification. Threonine 488 bears the Phosphothreonine mark.

This sequence belongs to the TFIIF alpha subunit family. Heterodimer of an alpha and a beta subunit. Phosphorylated on Ser and other residues by TAF1 and casein kinase II-like kinases.

The protein localises to the nucleus. Functionally, TFIIF is a general transcription initiation factor that binds to RNA polymerase II and helps to recruit it to the initiation complex in collaboration with TFIIB. It promotes transcription elongation. This is General transcription factor IIF subunit 1 from Drosophila melanogaster (Fruit fly).